Here is a 286-residue protein sequence, read N- to C-terminus: Bifunctional protein FolD (286 aa).

NADP(+) is bound by residues 165 to 167 (GRS), Ser-190, and Val-231.

Belongs to the tetrahydrofolate dehydrogenase/cyclohydrolase family. In terms of assembly, homodimer.

It catalyses the reaction (6R)-5,10-methylene-5,6,7,8-tetrahydrofolate + NADP(+) = (6R)-5,10-methenyltetrahydrofolate + NADPH. The enzyme catalyses (6R)-5,10-methenyltetrahydrofolate + H2O = (6R)-10-formyltetrahydrofolate + H(+). It functions in the pathway one-carbon metabolism; tetrahydrofolate interconversion. Functionally, catalyzes the oxidation of 5,10-methylenetetrahydrofolate to 5,10-methenyltetrahydrofolate and then the hydrolysis of 5,10-methenyltetrahydrofolate to 10-formyltetrahydrofolate. This is Bifunctional protein FolD from Bacillus cereus (strain AH187).